Consider the following 502-residue polypeptide: Probable malate:quinone oxidoreductase (502 aa).

Belongs to the MQO family. The cofactor is FAD.

It carries out the reaction (S)-malate + a quinone = a quinol + oxaloacetate. It functions in the pathway carbohydrate metabolism; tricarboxylic acid cycle; oxaloacetate from (S)-malate (quinone route): step 1/1. The protein is Probable malate:quinone oxidoreductase of Synechococcus sp. (strain CC9902).